Reading from the N-terminus, the 471-residue chain is 8-amino-7-oxononanoate synthase (471 aa).

Arginine 40 is a binding site for substrate. Residue glycine 131 to tyrosine 132 participates in pyridoxal 5'-phosphate binding. Position 156 (histidine 156) interacts with substrate. Pyridoxal 5'-phosphate-binding residues include serine 202, histidine 230, and threonine 258. N6-(pyridoxal phosphate)lysine is present on lysine 261. Threonine 377 provides a ligand contact to substrate. The interval serine 409–alanine 471 is disordered.

This sequence belongs to the class-II pyridoxal-phosphate-dependent aminotransferase family. BioF subfamily. As to quaternary structure, homodimer. It depends on pyridoxal 5'-phosphate as a cofactor.

The enzyme catalyses 6-carboxyhexanoyl-[ACP] + L-alanine + H(+) = (8S)-8-amino-7-oxononanoate + holo-[ACP] + CO2. Its pathway is cofactor biosynthesis; biotin biosynthesis. Its function is as follows. Catalyzes the decarboxylative condensation of pimeloyl-[acyl-carrier protein] and L-alanine to produce 8-amino-7-oxononanoate (AON), [acyl-carrier protein], and carbon dioxide. The protein is 8-amino-7-oxononanoate synthase of Burkholderia ambifaria (strain ATCC BAA-244 / DSM 16087 / CCUG 44356 / LMG 19182 / AMMD) (Burkholderia cepacia (strain AMMD)).